A 308-amino-acid chain; its full sequence is UPF0282 protein STK_23220 (308 aa).

This sequence belongs to the UPF0282 family.

This is UPF0282 protein STK_23220 from Sulfurisphaera tokodaii (strain DSM 16993 / JCM 10545 / NBRC 100140 / 7) (Sulfolobus tokodaii).